The chain runs to 1235 residues: ATP-dependent helicase/nuclease subunit A (1235 aa).

The 471-residue stretch at 12–482 folds into the UvrD-like helicase ATP-binding domain; it reads TLWTDDQWKA…IDLSQNFRSR (471 aa). 33–40 is an ATP binding site; sequence AAAGSGKT. A UvrD-like helicase C-terminal domain is found at 509–800; sequence AAELTLGANF…RMMTIHASKG (292 aa).

The protein belongs to the helicase family. AddA subfamily. Heterodimer of AddA and AddB/RexB. Requires Mg(2+) as cofactor.

The enzyme catalyses Couples ATP hydrolysis with the unwinding of duplex DNA by translocating in the 3'-5' direction.. The catalysed reaction is ATP + H2O = ADP + phosphate + H(+). The heterodimer acts as both an ATP-dependent DNA helicase and an ATP-dependent, dual-direction single-stranded exonuclease. Recognizes the chi site generating a DNA molecule suitable for the initiation of homologous recombination. The AddA nuclease domain is required for chi fragment generation; this subunit has the helicase and 3' -&gt; 5' nuclease activities. The chain is ATP-dependent helicase/nuclease subunit A from Listeria welshimeri serovar 6b (strain ATCC 35897 / DSM 20650 / CCUG 15529 / CIP 8149 / NCTC 11857 / SLCC 5334 / V8).